We begin with the raw amino-acid sequence, 440 residues long: MVPEPGPVNSSTPAWGPGPPPAPGGSGWVAAALCVVIVLTAAANSLLIALICTQPALRNTSNFFLVSLFTSDLMVGLVVMPPAMLNALYGRWVLARGLCLLWTAFDVMCCSASILNLCLISLDRYLLILSPLRYKLRMTAPRALALILGAWSLAALASFLPLLLGWHELGKARTSAPGQCRLLASLPYVLVASGVTFFLPSGAICFTYCRILLAARKQAVQVASLTTGTATAGQALETLQVPRTPRPGMESADSRRLTTKHSRKALKASLTLGILLSMFFVTWLPFFVASIAQAVCDCISPGLFDVLTWLGYCNSTMNPIIYPLFMRDFKRALGRFVPCVHCPPEHRASPASPSMWTSHSGARPGLSLQQVLPLPLPPNSDSDSASGGTSGLQLTAQLLLPGEATRDPPPPTRAPTVVNFFVTDSVEPEIRQHPLGSPMN.

Residues 1 to 27 (MVPEPGPVNSSTPAWGPGPPPAPGGSG) lie on the Extracellular side of the membrane. The N-linked (GlcNAc...) asparagine glycan is linked to Asn9. The helical transmembrane segment at 28-52 (WVAAALCVVIVLTAAANSLLIALIC) threads the bilayer. The Cytoplasmic portion of the chain corresponds to 53-62 (TQPALRNTSN). Residues 63–88 (FFLVSLFTSDLMVGLVVMPPAMLNAL) form a helical membrane-spanning segment. The Extracellular portion of the chain corresponds to 89–96 (YGRWVLAR). Residues 97 to 122 (GLCLLWTAFDVMCCSASILNLCLISL) form a helical membrane-spanning segment. Cys99 and Cys180 are oxidised to a cystine. Position 106 (Asp106) interacts with serotonin. At 123 to 142 (DRYLLILSPLRYKLRMTAPR) the chain is on the cytoplasmic side. Residues 143–167 (ALALILGAWSLAALASFLPLLLGWH) form a helical membrane-spanning segment. Residues 168 to 185 (ELGKARTSAPGQCRLLAS) are Extracellular-facing. Residues 186–209 (LPYVLVASGVTFFLPSGAICFTYC) form a helical membrane-spanning segment. Residues 210-268 (RILLAARKQAVQVASLTTGTATAGQALETLQVPRTPRPGMESADSRRLTTKHSRKALKA) lie on the Cytoplasmic side of the membrane. A helical transmembrane segment spans residues 269–295 (SLTLGILLSMFFVTWLPFFVASIAQAV). The Extracellular portion of the chain corresponds to 296–301 (CDCISP). A helical membrane pass occupies residues 302 to 325 (GLFDVLTWLGYCNSTMNPIIYPLF). Topologically, residues 326–440 (MRDFKRALGR…RQHPLGSPMN (115 aa)) are cytoplasmic.

The protein belongs to the G-protein coupled receptor 1 family. Interacts with CDK5. Interacts with MTOR. Interacts with RPTOR and NF1.

It localises to the cell membrane. Functionally, G-protein coupled receptor for 5-hydroxytryptamine (serotonin), a biogenic hormone that functions as a neurotransmitter, a hormone and a mitogen. Also has a high affinity for tricyclic psychotropic drugs. Ligand binding causes a conformation change that triggers signaling via guanine nucleotide-binding proteins (G proteins) and modulates the activity of downstream effectors. HTR6 is coupled to G(s) G alpha proteins and mediates activation of adenylate cyclase activity. Controls pyramidal neurons migration during corticogenesis, through the regulation of CDK5 activity. Is an activator of mTOR signaling. This chain is 5-hydroxytryptamine receptor 6, found in Mus musculus (Mouse).